The sequence spans 404 residues: S-adenosylmethionine synthase (404 aa).

Polar residues predominate over residues 1–13 (MSQSRYFFTSESV). Residues 1-20 (MSQSRYFFTSESVSEGHPDK) are disordered. H17 lines the ATP pocket. Residue D19 participates in Mg(2+) binding. E45 lines the K(+) pocket. The L-methionine site is built by E58 and Q101. The interval 101–111 (QSPDINRGVDR) is flexible loop. Residues 172-174 (DAK), 245-246 (RF), D254, 260-261 (RK), A277, and K281 contribute to the ATP site. An L-methionine-binding site is contributed by D254. L-methionine is bound at residue K285.

The protein belongs to the AdoMet synthase family. As to quaternary structure, homotetramer; dimer of dimers. It depends on Mg(2+) as a cofactor. The cofactor is K(+).

It localises to the cytoplasm. The enzyme catalyses L-methionine + ATP + H2O = S-adenosyl-L-methionine + phosphate + diphosphate. The protein operates within amino-acid biosynthesis; S-adenosyl-L-methionine biosynthesis; S-adenosyl-L-methionine from L-methionine: step 1/1. Its function is as follows. Catalyzes the formation of S-adenosylmethionine (AdoMet) from methionine and ATP. The overall synthetic reaction is composed of two sequential steps, AdoMet formation and the subsequent tripolyphosphate hydrolysis which occurs prior to release of AdoMet from the enzyme. In Chlorobium limicola (strain DSM 245 / NBRC 103803 / 6330), this protein is S-adenosylmethionine synthase.